A 389-amino-acid chain; its full sequence is 3-ketoacyl-CoA thiolase (389 aa).

C91 serves as the catalytic Acyl-thioester intermediate. Residues H343 and C373 each act as proton acceptor in the active site.

This sequence belongs to the thiolase-like superfamily. Thiolase family. In terms of assembly, heterotetramer of two alpha chains (FadB) and two beta chains (FadA).

The protein resides in the cytoplasm. The enzyme catalyses an acyl-CoA + acetyl-CoA = a 3-oxoacyl-CoA + CoA. Its pathway is lipid metabolism; fatty acid beta-oxidation. In terms of biological role, catalyzes the final step of fatty acid oxidation in which acetyl-CoA is released and the CoA ester of a fatty acid two carbons shorter is formed. This chain is 3-ketoacyl-CoA thiolase, found in Citrobacter koseri (strain ATCC BAA-895 / CDC 4225-83 / SGSC4696).